The sequence spans 205 residues: Holliday junction branch migration complex subunit RuvA (205 aa).

Positions 1 to 64 (MIGKLKGVID…EDQIKLFGFR (64 aa)) are domain I. The tract at residues 65–143 (TDHEREWFRL…SFANVDPTVV (79 aa)) is domain II. The flexible linker stretch occupies residues 144–154 (HLAGDLDDQRA). The segment at 154–205 (APRPVRDAISALVNLGYGQPQATAAIAAASRGAGENAETAQLIRLGLKELSK) is domain III.

The protein belongs to the RuvA family. Homotetramer. Forms an RuvA(8)-RuvB(12)-Holliday junction (HJ) complex. HJ DNA is sandwiched between 2 RuvA tetramers; dsDNA enters through RuvA and exits via RuvB. An RuvB hexamer assembles on each DNA strand where it exits the tetramer. Each RuvB hexamer is contacted by two RuvA subunits (via domain III) on 2 adjacent RuvB subunits; this complex drives branch migration. In the full resolvosome a probable DNA-RuvA(4)-RuvB(12)-RuvC(2) complex forms which resolves the HJ.

The protein resides in the cytoplasm. Functionally, the RuvA-RuvB-RuvC complex processes Holliday junction (HJ) DNA during genetic recombination and DNA repair, while the RuvA-RuvB complex plays an important role in the rescue of blocked DNA replication forks via replication fork reversal (RFR). RuvA specifically binds to HJ cruciform DNA, conferring on it an open structure. The RuvB hexamer acts as an ATP-dependent pump, pulling dsDNA into and through the RuvAB complex. HJ branch migration allows RuvC to scan DNA until it finds its consensus sequence, where it cleaves and resolves the cruciform DNA. The chain is Holliday junction branch migration complex subunit RuvA from Nitrobacter winogradskyi (strain ATCC 25391 / DSM 10237 / CIP 104748 / NCIMB 11846 / Nb-255).